The primary structure comprises 1305 residues: Contactin-associated protein like 5-1 (1305 aa).

Positions M1–T24 are cleaved as a signal peptide. An F5/8 type C domain is found at A25–C174. Laminin G-like domains follow at residues V180 to C360 and P367 to C544. The N-linked (GlcNAc...) asparagine glycan is linked to N282. A disulfide bond links C329 and C360. N-linked (GlcNAc...) asparagine glycosylation is present at N496. Cystine bridges form between C512-C544, C550-C561, and C555-C570. An EGF-like 1 domain is found at I546–H583. The N-linked (GlcNAc...) asparagine glycan is linked to N571. C572 and C582 are disulfide-bonded. One can recognise a Fibrinogen C-terminal domain in the interval D584–W790. Residue N622 is glycosylated (N-linked (GlcNAc...) asparagine). Residues N791 to C956 enclose the Laminin G-like 3 domain. 4 disulfide bridges follow: C929–C956, C960–C973, C967–C982, and C984–C994. An EGF-like 2 domain is found at P957–Q995. In terms of domain architecture, Laminin G-like 4 spans E1014–C1198. N1057 carries N-linked (GlcNAc...) asparagine glycosylation. C1163 and C1198 are oxidised to a cystine. A helical transmembrane segment spans residues V1238–I1258.

This sequence belongs to the neurexin family.

Its subcellular location is the membrane. Functionally, may play a role in the correct development and proper functioning of the peripheral and central nervous system and be involved in cell adhesion and intercellular communication. This chain is Contactin-associated protein like 5-1 (Cntnap5a), found in Rattus norvegicus (Rat).